The chain runs to 509 residues: Histidine ammonia-lyase (509 aa).

Residues 142–144 constitute a cross-link (5-imidazolinone (Ala-Gly)); that stretch reads ASG. Ser143 is subject to 2,3-didehydroalanine (Ser).

This sequence belongs to the PAL/histidase family. Contains an active site 4-methylidene-imidazol-5-one (MIO), which is formed autocatalytically by cyclization and dehydration of residues Ala-Ser-Gly.

Its subcellular location is the cytoplasm. The catalysed reaction is L-histidine = trans-urocanate + NH4(+). The protein operates within amino-acid degradation; L-histidine degradation into L-glutamate; N-formimidoyl-L-glutamate from L-histidine: step 1/3. This is Histidine ammonia-lyase from Sphingopyxis alaskensis (strain DSM 13593 / LMG 18877 / RB2256) (Sphingomonas alaskensis).